Reading from the N-terminus, the 256-residue chain is Ras-related protein Rab-26 (256 aa).

Positions 1–53 (MSRKKTPKSKAGSAPATSALPAANGPRPVRPGTARPGPEAPPNGPPQPGRSSV) are disordered. The span at 38-48 (PEAPPNGPPQP) shows a compositional bias: pro residues. Residues S72, G73, V74, G75, K76, T77, C78, S95, and T96 each contribute to the GTP site. T77 contributes to the Mg(2+) binding site. 2 consecutive short sequence motifs (switch) follow at residues 86-101 (GAFL…GIDF) and 119-136 (DTAG…YYRD). T96 and D119 together coordinate Mg(2+). GTP is bound by residues G122, N177, K178, D180, A208, and K209. Residues C253 and C254 are each lipidated (S-geranylgeranyl cysteine).

It belongs to the small GTPase superfamily. Rab family. The cofactor is Mg(2+).

The protein localises to the cell membrane. The enzyme catalyses GTP + H2O = GDP + phosphate + H(+). Regulated by guanine nucleotide exchange factors (GEFs) which promote the exchange of bound GDP for free GTP. Regulated by GTPase activating proteins (GAPs) which increase the GTP hydrolysis activity. Inhibited by GDP dissociation inhibitors (GDIs). Its function is as follows. The small GTPases Rab are key regulators of intracellular membrane trafficking, from the formation of transport vesicles to their fusion with membranes. Rabs cycle between an inactive GDP-bound form and an active GTP-bound form that is able to recruit to membranes different set of downstream effectors directly responsible for vesicle formation, movement, tethering and fusion. RAB26 mediates transport of ADRA2A and ADRA2B from the Golgi to the cell membrane. Plays a role in the maturation of zymogenic granules and in pepsinogen secretion in the stomach. Plays a role in the secretion of amylase from acinar granules in the parotid gland. The chain is Ras-related protein Rab-26 (RAB26) from Bos taurus (Bovine).